Reading from the N-terminus, the 46-residue chain is Peroxidase 1 (46 aa).

The protein belongs to the peroxidase family. Classical plant (class III) peroxidase subfamily. Requires heme b as cofactor. The cofactor is Ca(2+).

It is found in the secreted. The enzyme catalyses 2 a phenolic donor + H2O2 = 2 a phenolic radical donor + 2 H2O. Its function is as follows. Removal of H(2)O(2), oxidation of toxic reductants, biosynthesis and degradation of lignin, suberization, auxin catabolism, response to environmental stresses such as wounding, pathogen attack and oxidative stress. These functions might be dependent on each isozyme/isoform in each plant tissue. The polypeptide is Peroxidase 1 (Catharanthus roseus (Madagascar periwinkle)).